A 250-amino-acid polypeptide reads, in one-letter code: Uridylate kinase (250 aa).

17-20 is an ATP binding site; that stretch reads KLSG. G59 contacts UMP. Residues G60 and R64 each contribute to the ATP site. UMP is bound by residues D79 and 140-147; that span reads TGNPYFTT. ATP is bound by residues T167, Y173, and D176.

The protein belongs to the UMP kinase family. In terms of assembly, homohexamer.

The protein resides in the cytoplasm. It carries out the reaction UMP + ATP = UDP + ADP. It functions in the pathway pyrimidine metabolism; CTP biosynthesis via de novo pathway; UDP from UMP (UMPK route): step 1/1. Its activity is regulated as follows. Inhibited by UTP. Its function is as follows. Catalyzes the reversible phosphorylation of UMP to UDP. The protein is Uridylate kinase of Myxococcus xanthus (strain DK1622).